The following is a 350-amino-acid chain: Methylthioribose-1-phosphate isomerase (350 aa).

Residues 48–50 (RGA), R93, and Q198 each bind substrate. D239 acts as the Proton donor in catalysis. Residue 249-250 (NK) coordinates substrate.

The protein belongs to the eIF-2B alpha/beta/delta subunits family. MtnA subfamily.

It carries out the reaction 5-(methylsulfanyl)-alpha-D-ribose 1-phosphate = 5-(methylsulfanyl)-D-ribulose 1-phosphate. The protein operates within amino-acid biosynthesis; L-methionine biosynthesis via salvage pathway; L-methionine from S-methyl-5-thio-alpha-D-ribose 1-phosphate: step 1/6. Functionally, catalyzes the interconversion of methylthioribose-1-phosphate (MTR-1-P) into methylthioribulose-1-phosphate (MTRu-1-P). The protein is Methylthioribose-1-phosphate isomerase of Fervidobacterium nodosum (strain ATCC 35602 / DSM 5306 / Rt17-B1).